The following is a 449-amino-acid chain: Biotin carboxylase (449 aa).

The 445-residue stretch at 1–445 (MLDKIVIANR…NIHYLEKKLG (445 aa)) folds into the Biotin carboxylation domain. ATP contacts are provided by residues K116, K159, 165–166 (GG), 201–204 (EKYL), H209, and H236. Positions 120 to 317 (IAAMKKAGVP…LIKEQLRIAA (198 aa)) constitute an ATP-grasp domain. Residue K238 coordinates hydrogencarbonate. Residues E276 and E288 each contribute to the ATP site. Mg(2+)-binding residues include E276, E288, and N290. Mn(2+) is bound by residues E276, E288, and N290. The hydrogencarbonate site is built by R292, V295, and R338. The active site involves R292. Residue R338 participates in biotin binding.

Acetyl-CoA carboxylase is a heterohexamer of biotin carboxyl carrier protein, biotin carboxylase and the two subunits of carboxyl transferase in a 2:2 complex. Mg(2+) serves as cofactor. Requires Mn(2+) as cofactor.

The enzyme catalyses N(6)-biotinyl-L-lysyl-[protein] + hydrogencarbonate + ATP = N(6)-carboxybiotinyl-L-lysyl-[protein] + ADP + phosphate + H(+). The protein operates within lipid metabolism; malonyl-CoA biosynthesis; malonyl-CoA from acetyl-CoA: step 1/1. Functionally, this protein is a component of the acetyl coenzyme A carboxylase complex; first, biotin carboxylase catalyzes the carboxylation of the carrier protein and then the transcarboxylase transfers the carboxyl group to form malonyl-CoA. The protein is Biotin carboxylase (accC) of Escherichia coli (strain K12).